Consider the following 661-residue polypeptide: MELKKDSNAVAIDMLLIVHSEKRRAAQATHLDPQANPGALLQNRGGFQGVRNGIRKWQELEENSFQGNLPEKQCLQQPQVITSYDNQGTQLTVEIHPQDAMPQLLKKFSLAKRLQGDKNGNMRPRQPGGKDAHAYPWDRSSLKSMPLDLRLFEKLDASASQVTVKSGLNELVSDLLQEAHSDLERVRAIWIWICHHIEYDVEAAQEKDRQAFKPTDILRTQKTNCDGYAGLFERMCRVAGVQCVTVPGYSKGFGYQTGQSFSGEFDHAWNAVYLEGRWHLVDSTWGSGLVDTTTSKFTFLYNEFYFLTHPALFIEDHFPDNKNWQLLKPPQSLRQFENSMYHKSEFYNKGMLSAHPETSMIRTVNGKATITIESRAPTLFMFMLNGKQEHGLLSLRKNGMKLEVYPPTMGTHKLQIFAKGNSEIYSSVLEYTLKCNYVDFSVQLPSELHQPVGPSWFSEQMGITKPSHSDPIIHTSDGRCAISFSVEEGVSVLASLHGDDGPITEETQRRYIFQLNRGKRTELKVQLPHAGKFALKIFVKKRQEQGNFIFVFNYLLCCANTKVNWPMFPESFGNWGQDNELLEPLSGVLPANRNVAFKLKLHGIAKALVKGQDTWPLTLNPEGYWEGSCNTAGCQEVYVMVLENANHNFYSYILKYKVNDQ.

The tract at residues 116–137 is disordered; the sequence is GDKNGNMRPRQPGGKDAHAYPW. Catalysis depends on residues C225, H267, and D282.

Belongs to the transglutaminase-like superfamily. Interacts with IGFN1 and FLNC. As to expression, specifically expressed in skeletal and cardiac muscle.

It is found in the cytoplasm. The protein resides in the cytoskeleton. It localises to the myofibril. Its subcellular location is the sarcomere. The protein localises to the z line. In terms of biological role, probable cytoskeleton-associated protease required for normal muscle growth. Involved in function, maturation and stabilization of the neuromuscular junction. May act by cleaving muscle-specific proteins such as FLNC. This Mus musculus (Mouse) protein is Kyphoscoliosis peptidase.